Reading from the N-terminus, the 224-residue chain is uncharacterized protein (224 aa).

An N-terminal signal peptide occupies residues 1 to 23 (MKKLLAAGIIGLLTVSIASPSFA). Residues 31–224 (NVAVLFDGSG…WEKEAQKFTE (194 aa)) form the VWFA domain.

The protein to B.subtilis YwmC.

This is an uncharacterized protein from Bacillus subtilis (strain 168).